Reading from the N-terminus, the 335-residue chain is MLLIGVAGTTLSAQEVDWLQDDAVAGVVLFKRNFASRAQIVELSAALREAAPRPLLLAVDQEGGRVQRFHEGYSALPPLQGIGALYVRDPEAALELAFEHAWLMASEVRASGVDLSFAPVVDLGRGNRAIGDRAFSDDPHVVAAFAKAYVQGMHAAGMPVTLKHFPGHGSVLEDTHVDLAVDVRALETLESEDLVPFAAGIAAGADAVMMAHVVYPNVAPEPAGFSAHWIEVILRGRMGFRGVVFSDDIGMAAVRGVGGVVGCVHAHLDAGCDVVLVCHPELVNDALSAVAGRRSNTAALIGLIGRGVLGWDGLLADVRYGSIQSHLFERFGTST.

Substrate-binding positions include Asp-60, Arg-68, Arg-133, and 163–164 (KH). Catalysis depends on His-176, which acts as the Proton donor/acceptor. Asp-247 acts as the Nucleophile in catalysis.

The protein belongs to the glycosyl hydrolase 3 family. NagZ subfamily.

It is found in the cytoplasm. It carries out the reaction Hydrolysis of terminal non-reducing N-acetyl-D-hexosamine residues in N-acetyl-beta-D-hexosaminides.. It functions in the pathway cell wall biogenesis; peptidoglycan recycling. Plays a role in peptidoglycan recycling by cleaving the terminal beta-1,4-linked N-acetylglucosamine (GlcNAc) from peptide-linked peptidoglycan fragments, giving rise to free GlcNAc, anhydro-N-acetylmuramic acid and anhydro-N-acetylmuramic acid-linked peptides. The chain is Beta-hexosaminidase from Xylella fastidiosa (strain M23).